Reading from the N-terminus, the 255-residue chain is Tachylectin-2 (255 aa).

An N-terminal signal peptide occupies residues 1–19 (MKFLLVVLGFIGFLKDGIT). 5 WD repeats span residues 20 to 67 (VGGE…FLFL), 68 to 114 (SPGG…FLFF), 115 to 161 (DPNG…FLFF), 162 to 208 (HPNG…FLFF), and 209 to 255 (SSVG…FLFF).

In terms of assembly, monomer.

The protein localises to the secreted. Its subcellular location is the cytoplasmic granule. Functionally, lectin that binds specifically to N-acetylglucosamine and N-acetylgalactosamine. Is part of the innate immunity host defense system of the horseshoe crab. This chain is Tachylectin-2, found in Tachypleus tridentatus (Japanese horseshoe crab).